Consider the following 254-residue polypeptide: Isoprenyl transferase (254 aa).

The active site involves aspartate 23. A Mg(2+)-binding site is contributed by aspartate 23. Residues 24 to 27 (GNGR), tryptophan 28, arginine 36, histidine 40, and 68 to 70 (STE) contribute to the substrate site. Residue asparagine 71 is the Proton acceptor of the active site. Substrate contacts are provided by residues tryptophan 72, arginine 74, arginine 191, and 197–199 (RIS). Glutamate 210 lines the Mg(2+) pocket.

Belongs to the UPP synthase family. In terms of assembly, homodimer. It depends on Mg(2+) as a cofactor.

In terms of biological role, catalyzes the condensation of isopentenyl diphosphate (IPP) with allylic pyrophosphates generating different type of terpenoids. The chain is Isoprenyl transferase from Porphyromonas gingivalis (strain ATCC BAA-308 / W83).